The sequence spans 324 residues: Type II restriction enzyme AplI (324 aa).

It belongs to the BsuBI/PstI type II restriction endonuclease family. The cofactor is Mg(2+).

It carries out the reaction Endonucleolytic cleavage of DNA to give specific double-stranded fragments with terminal 5'-phosphates.. Activated by K(+) and Na(+) ions, whereas NH(4)(+) ions appear to inhibit endonuclease activity. Functionally, a P subtype restriction enzyme that recognizes the double-stranded sequence 5'-CTGCAG-3' and cleaves after A-5. This is Type II restriction enzyme AplI (aplIR) from Arthrospira platensis (strain NIES-39 / UTEX 3086 / IAM M-135) (Spirulina platensis).